Here is a 396-residue protein sequence, read N- to C-terminus: L-lactate dehydrogenase (396 aa).

Residues 1–380 (MIISAASDYR…SGDSLVQELG (380 aa)) form the FMN hydroxy acid dehydrogenase domain. Y24 contacts substrate. Positions 106 and 127 each coordinate FMN. Y129 contributes to the substrate binding site. Position 155 (T155) interacts with FMN. R164 provides a ligand contact to substrate. Residue K251 coordinates FMN. The active-site Proton acceptor is the H275. R278 is a substrate binding site. 306–330 (DSGIRNGLDVVRMIALGADTVLLGR) lines the FMN pocket.

It belongs to the FMN-dependent alpha-hydroxy acid dehydrogenase family. Requires FMN as cofactor.

Its subcellular location is the cell inner membrane. The catalysed reaction is (S)-lactate + A = pyruvate + AH2. Functionally, catalyzes the conversion of L-lactate to pyruvate. Is coupled to the respiratory chain. The chain is L-lactate dehydrogenase from Salmonella arizonae (strain ATCC BAA-731 / CDC346-86 / RSK2980).